The chain runs to 387 residues: 3-ketoacyl-CoA thiolase (387 aa).

The active-site Acyl-thioester intermediate is Cys91. Residues His343 and Cys373 each act as proton acceptor in the active site.

Belongs to the thiolase-like superfamily. Thiolase family. As to quaternary structure, heterotetramer of two alpha chains (FadB) and two beta chains (FadA).

The protein resides in the cytoplasm. It carries out the reaction an acyl-CoA + acetyl-CoA = a 3-oxoacyl-CoA + CoA. Its pathway is lipid metabolism; fatty acid beta-oxidation. Its function is as follows. Catalyzes the final step of fatty acid oxidation in which acetyl-CoA is released and the CoA ester of a fatty acid two carbons shorter is formed. This is 3-ketoacyl-CoA thiolase from Escherichia coli O6:K15:H31 (strain 536 / UPEC).